We begin with the raw amino-acid sequence, 493 residues long: 3-octaprenyl-4-hydroxybenzoate carboxy-lyase (493 aa).

Asn172 provides a ligand contact to Mn(2+). Prenylated FMN contacts are provided by residues 175–177 (IYR), 189–191 (RWL), and 194–195 (RG). Glu238 contacts Mn(2+). The Proton donor role is filled by Asp287.

It belongs to the UbiD family. As to quaternary structure, homohexamer. Prenylated FMN serves as cofactor. It depends on Mn(2+) as a cofactor.

The protein resides in the cell membrane. The catalysed reaction is a 4-hydroxy-3-(all-trans-polyprenyl)benzoate + H(+) = a 2-(all-trans-polyprenyl)phenol + CO2. Its pathway is cofactor biosynthesis; ubiquinone biosynthesis. Its function is as follows. Catalyzes the decarboxylation of 3-octaprenyl-4-hydroxy benzoate to 2-octaprenylphenol, an intermediate step in ubiquinone biosynthesis. The sequence is that of 3-octaprenyl-4-hydroxybenzoate carboxy-lyase from Shewanella woodyi (strain ATCC 51908 / MS32).